Reading from the N-terminus, the 386-residue chain is Probable zinc transporter zrg17 (386 aa).

6 consecutive transmembrane segments (helical) span residues 102-122 (ILFFLVAVGVLLSGDATILLT), 128-148 (IVEGVLIIINVWRETLDSFLV), 163-183 (MELLVDFSFSILLIFLGMNLL), 208-228 (VHIHLTISLFASAIISGFALL), 243-263 (FFHGLTLVPSLILVLLLSLGY), and 268-288 (FLSHLLSLTIAVTALVNGFSI).

It belongs to the cation diffusion facilitator (CDF) transporter (TC 2.A.4) family. SLC30A subfamily. In terms of assembly, interacts with cis4.

The protein localises to the cytoplasm. It localises to the nucleus membrane. In terms of biological role, probable transporter involved in the regulation of zinc homeostasis. In Schizosaccharomyces pombe (strain 972 / ATCC 24843) (Fission yeast), this protein is Probable zinc transporter zrg17 (zrg17).